The following is a 233-amino-acid chain: Phycoerythrobilin synthase (233 aa).

It belongs to the HY2 family.

The catalysed reaction is (3Z)-phycoerythrobilin + 2 oxidized 2[4Fe-4S]-[ferredoxin] = biliverdin IXalpha + 2 reduced 2[4Fe-4S]-[ferredoxin] + 4 H(+). Plays a role in phycoerythrobilin biosynthesis, the red pigment chromophore photosynthetically active biliproteins of the host cyanobacteria. Uses a four-electron reduction to carry out the reactions catalyzed by two enzymes (EC 1.3.7.2 and EC 1.3.7.3) in host. In Prochlorococcus, this protein is Phycoerythrobilin synthase (pebS).